A 135-amino-acid chain; its full sequence is MAKTSRSVMIAKGLQRVLNVGLLLLAAILIVFLVKETIHLAKVLFVNNEESTSYLLIEGIVIYFLYFEFIALIVKYFESGYHFPLRYFIYIGITAIIRLIIVDHENPIDTLIYSAAILLLVVTLYLANTDRLKRE.

The next 4 helical transmembrane spans lie at 20–40, 54–74, 82–102, and 107–127; these read VGLL…TIHL, YLLI…ALIV, HFPL…LIIV, and PIDT…LYLA.

This sequence belongs to the PsiE family.

It localises to the cell inner membrane. The sequence is that of Protein PsiE homolog from Serratia proteamaculans (strain 568).